A 224-amino-acid polypeptide reads, in one-letter code: Urease accessory protein UreF (224 aa).

It belongs to the UreF family. In terms of assembly, ureD, UreF and UreG form a complex that acts as a GTP-hydrolysis-dependent molecular chaperone, activating the urease apoprotein by helping to assemble the nickel containing metallocenter of UreC. The UreE protein probably delivers the nickel.

The protein localises to the cytoplasm. Required for maturation of urease via the functional incorporation of the urease nickel metallocenter. This Pseudomonas putida (strain W619) protein is Urease accessory protein UreF.